A 145-amino-acid polypeptide reads, in one-letter code: Hydrophobin-like protein 1 (145 aa).

Residues 1 to 20 form the signal peptide; the sequence is MYLLQISISLLLLISTAATA. N-linked (GlcNAc...) asparagine glycosylation occurs at N36. 4 disulfides stabilise this stretch: C61–C121, C71–C113, C72–C104, and C122–C139.

The protein localises to the secreted. It is found in the cell wall. Aerial growth, conidiation, and dispersal of filamentous fungi in the environment rely upon a capability of their secreting small amphipathic proteins called hydrophobins (HPBs) with low sequence identity. Class I can self-assemble into an outermost layer of rodlet bundles on aerial cell surfaces, conferring cellular hydrophobicity that supports fungal growth, development and dispersal; whereas Class II form highly ordered films at water-air interfaces through intermolecular interactions but contribute nothing to the rodlet structure. In Botryotinia fuckeliana, hydrophobins are not involved in conferring surface hydrophobicity to conidia and aerial hyphae and their function in sclerotia and fruiting bodies remains to be investigated. The polypeptide is Hydrophobin-like protein 1 (Botryotinia fuckeliana (strain B05.10) (Noble rot fungus)).